The sequence spans 554 residues: Undecaprenyl phosphate-alpha-4-amino-4-deoxy-L-arabinose arabinosyl transferase (554 aa).

A run of 11 helical transmembrane segments spans residues 4 to 24 (LKDSGAALLALFFVLVYLLPV), 87 to 107 (FGSIFSTALSAVLVYWLATLL), 115 to 135 (VLATLIYLSFLLVFGIGTYAV), 178 to 198 (FMTKGFLALAVPVIAVLPIVI), 206 to 226 (LVVFGPIAIVCAVLLSLPWAL), 262 to 282 (YLPILCIGVLPWLGLLPGALF), 293 to 313 (ELFFLLSWVVMPLLFFSVAKG), 315 to 335 (LPTYILPCMAPLSLLMAAYAT), 351 to 371 (VINLLFGVACALVIVVIGLGL), 384 to 404 (QKVWLGVLAFAGWGVTGFITL), and 414 to 434 (AAACPLLFILLVGYLIPQQVV).

The protein belongs to the glycosyltransferase 83 family.

Its subcellular location is the cell inner membrane. The catalysed reaction is 4-amino-4-deoxy-alpha-L-arabinopyranosyl di-trans,octa-cis-undecaprenyl phosphate + lipid IVA = lipid IIA + di-trans,octa-cis-undecaprenyl phosphate.. It participates in lipopolysaccharide metabolism; 4-amino-4-deoxy-beta-L-arabinose-lipid A biosynthesis. Catalyzes the transfer of the L-Ara4N moiety of the glycolipid undecaprenyl phosphate-alpha-L-Ara4N to lipid A. The modified arabinose is attached to lipid A and is required for resistance to polymyxin and cationic antimicrobial peptides. The chain is Undecaprenyl phosphate-alpha-4-amino-4-deoxy-L-arabinose arabinosyl transferase from Yersinia pseudotuberculosis serotype O:1b (strain IP 31758).